Reading from the N-terminus, the 162-residue chain is Transcription elongation factor GreA (162 aa).

Residues 46 to 77 (RENAEYKAAREEQTRLNNMVTRLQEEIERAQV) adopt a coiled-coil conformation.

It belongs to the GreA/GreB family.

In terms of biological role, necessary for efficient RNA polymerase transcription elongation past template-encoded arresting sites. The arresting sites in DNA have the property of trapping a certain fraction of elongating RNA polymerases that pass through, resulting in locked ternary complexes. Cleavage of the nascent transcript by cleavage factors such as GreA or GreB allows the resumption of elongation from the new 3'terminus. GreA releases sequences of 2 to 3 nucleotides. The sequence is that of Transcription elongation factor GreA from Treponema pallidum (strain Nichols).